The following is a 546-amino-acid chain: Chaperonin GroEL 4 (546 aa).

ATP is bound by residues 30 to 33 (TLGP), Lys-51, 87 to 91 (DGTTT), Gly-415, and Asp-496.

This sequence belongs to the chaperonin (HSP60) family. Forms a cylinder of 14 subunits composed of two heptameric rings stacked back-to-back. Interacts with the co-chaperonin GroES.

The protein localises to the cytoplasm. The enzyme catalyses ATP + H2O + a folded polypeptide = ADP + phosphate + an unfolded polypeptide.. Functionally, together with its co-chaperonin GroES, plays an essential role in assisting protein folding. The GroEL-GroES system forms a nano-cage that allows encapsulation of the non-native substrate proteins and provides a physical environment optimized to promote and accelerate protein folding. The protein is Chaperonin GroEL 4 of Bradyrhizobium sp. (strain BTAi1 / ATCC BAA-1182).